Consider the following 408-residue polypeptide: F-box A protein 155 (408 aa).

The interval 1-22 (MSDRGSDQSSSSSDSAQHIPPK) is disordered.

It belongs to the FTH family.

The polypeptide is F-box A protein 155 (fbxa-155) (Caenorhabditis elegans).